The chain runs to 274 residues: Thiazole synthase (274 aa).

The active-site Schiff-base intermediate with DXP is the Lys-115. Residues Gly-176, 202-203 (AG), and 224-225 (NS) each bind 1-deoxy-D-xylulose 5-phosphate.

The protein belongs to the ThiG family. As to quaternary structure, homotetramer. Forms heterodimers with either ThiH or ThiS.

The protein localises to the cytoplasm. It carries out the reaction [ThiS sulfur-carrier protein]-C-terminal-Gly-aminoethanethioate + 2-iminoacetate + 1-deoxy-D-xylulose 5-phosphate = [ThiS sulfur-carrier protein]-C-terminal Gly-Gly + 2-[(2R,5Z)-2-carboxy-4-methylthiazol-5(2H)-ylidene]ethyl phosphate + 2 H2O + H(+). It participates in cofactor biosynthesis; thiamine diphosphate biosynthesis. In terms of biological role, catalyzes the rearrangement of 1-deoxy-D-xylulose 5-phosphate (DXP) to produce the thiazole phosphate moiety of thiamine. Sulfur is provided by the thiocarboxylate moiety of the carrier protein ThiS. In vitro, sulfur can be provided by H(2)S. This is Thiazole synthase from Psychrobacter cryohalolentis (strain ATCC BAA-1226 / DSM 17306 / VKM B-2378 / K5).